The following is a 536-amino-acid chain: Phosphoenolpyruvate carboxykinase (ATP) (536 aa).

Substrate-binding residues include Arg-61, Tyr-195, and Lys-201. Residues Lys-201, His-220, and 236-244 (GLSGTGKTT) contribute to the ATP site. Mn(2+) is bound by residues Lys-201 and His-220. Residue Asp-257 coordinates Mn(2+). Residues Glu-285, Arg-322, and Thr-447 each contribute to the ATP site. Arg-322 serves as a coordination point for substrate.

This sequence belongs to the phosphoenolpyruvate carboxykinase (ATP) family. It depends on Mn(2+) as a cofactor.

The protein localises to the cytoplasm. The catalysed reaction is oxaloacetate + ATP = phosphoenolpyruvate + ADP + CO2. It participates in carbohydrate biosynthesis; gluconeogenesis. Its function is as follows. Involved in the gluconeogenesis. Catalyzes the conversion of oxaloacetate (OAA) to phosphoenolpyruvate (PEP) through direct phosphoryl transfer between the nucleoside triphosphate and OAA. This Agrobacterium fabrum (strain C58 / ATCC 33970) (Agrobacterium tumefaciens (strain C58)) protein is Phosphoenolpyruvate carboxykinase (ATP).